Here is a 264-residue protein sequence, read N- to C-terminus: Glutamate racemase (264 aa).

Residues 9 to 10 (DS) and 41 to 42 (YG) each bind substrate. The active-site Proton donor/acceptor is the cysteine 72. 73–74 (NT) lines the substrate pocket. Cysteine 183 functions as the Proton donor/acceptor in the catalytic mechanism. Substrate is bound at residue 184–185 (TH).

It belongs to the aspartate/glutamate racemases family.

The enzyme catalyses L-glutamate = D-glutamate. The protein operates within cell wall biogenesis; peptidoglycan biosynthesis. Functionally, provides the (R)-glutamate required for cell wall biosynthesis. In Geobacillus sp. (strain WCH70), this protein is Glutamate racemase.